We begin with the raw amino-acid sequence, 828 residues long: Protein SEY1 homolog (828 aa).

Over 1-718 the chain is Cytoplasmic; the sequence is MTEDVMNDDF…SSKNGISWKN (718 aa). In terms of domain architecture, GB1/RHD3-type G spans 44–284; it reads GFNYNVLSIL…VPSDGFFYYA (241 aa). 54-61 serves as a coordination point for GTP; sequence GCQSSGKS. Residues 719 to 739 form a helical membrane-spanning segment; the sequence is IPPPFWILLLLCSWNELCSVL. Topologically, residues 740–742 are lumenal; it reads RIV. A helical transmembrane segment spans residues 743–763; the sequence is FKVQVLIPLIILGFIVVQYFS. The Cytoplasmic segment spans residues 764–828; that stretch reads HLVFGTSADA…NDSGKKAEEN (65 aa).

This sequence belongs to the TRAFAC class dynamin-like GTPase superfamily. GB1/RHD3 GTPase family. RHD3 subfamily.

The protein localises to the endoplasmic reticulum membrane. Probable GTP-binding protein that may be involved in cell development. The chain is Protein SEY1 homolog from Babesia bovis.